The sequence spans 499 residues: MTPVVALVGRPNVGKSTLFNRLTRTRDALVADFPGLTRDRKYGQAKLGELEFIVVDTGGIDGTEEGIELKMAEQSLLAIEEADVVLFMVDARAGLTAADQAIAEHLRKTHKKVFLVANKTDGIDGDSAVSEFYGLALGEVYQMAAAHGRGVLSLLELALAPHLETLVDAATQETAQDEEEEDFDEEALLRMVAAGELDTKEDTKETPFADLPIKFAIVGRPNVGKSTLTNRMLGEDRVIVYDMPGTTRDSVYIPMERDEQKYVIIDTAGVRRRGKVHETVEKFSVIKTLKAIEDANVCLLVIDAQETITDQDLSILGFVLNTGRSVVLVVNKWDGLDQKVKEDVKNELDRRLGFIDFARVHFISALHGSGVGHLFESIQEAYQSATRRTSTAMLTRIMQMAQEDHQPPMVNGRRVKLKYAHAGGYNPPRIVIHGNQLNDLPDSYKRYLINYFRKSLKIMGTPVRVEFQESANPFEGKKNTLTLSQERQRKRLLKAKAKK.

EngA-type G domains follow at residues P3–L166 and I213–T386. GTP-binding positions include G9–S16, D56–I60, N118–D121, G219–S226, D266–V270, and N331–D334. The 85-residue stretch at R387–A471 folds into the KH-like domain.

This sequence belongs to the TRAFAC class TrmE-Era-EngA-EngB-Septin-like GTPase superfamily. EngA (Der) GTPase family. Associates with the 50S ribosomal subunit.

In terms of biological role, GTPase that plays an essential role in the late steps of ribosome biogenesis. The polypeptide is GTPase Der (Aeromonas hydrophila subsp. hydrophila (strain ATCC 7966 / DSM 30187 / BCRC 13018 / CCUG 14551 / JCM 1027 / KCTC 2358 / NCIMB 9240 / NCTC 8049)).